The primary structure comprises 280 residues: H-2 class II histocompatibility antigen gamma chain (280 aa).

Residues 1–30 lie on the Cytoplasmic side of the membrane; sequence MDDQRDLISNHEQLPILGQRARAPESNCNR. S9 carries the phosphoserine modification. The helical; Signal-anchor for type II membrane protein transmembrane segment at 31 to 56 threads the bilayer; sequence GVLYTSVSVLVALLLAGQATTAYFLY. The Extracellular portion of the chain corresponds to 57 to 280; that stretch reads QQQGRLDKLT…TKQDMGQMFL (224 aa). Residues N114 and N120 are each glycosylated (N-linked (GlcNAc...) asparagine). The Thyroglobulin type-1 domain maps to 194 to 255; sequence LTKCQEEVSH…HTKSRGRHNC (62 aa). Disulfide bonds link C197-C216, C227-C234, and C236-C255. The interval 246 to 268 is disordered; it reads HTKSRGRHNCSEPLDMEDPSSGL. O-linked (Xyl...) (chondroitin sulfate) serine glycosylation is present at S266.

Nonamer composed of three alpha/beta/gamma heterotrimers. Interacts with CD44; this complex is essential for the MIF-induced signaling cascade that results in B cell survival. As to quaternary structure, interacts with the mature form of CTSL; the complex survive in neutral pH environment.

The protein localises to the late endosome. The protein resides in the lysosome. It is found in the cell membrane. It localises to the endoplasmic reticulum membrane. Its subcellular location is the golgi apparatus. The protein localises to the trans-Golgi network. The protein resides in the endosome. It is found in the secreted. Its function is as follows. Plays a critical role in MHC class II antigen processing by stabilizing peptide-free class II alpha/beta heterodimers in a complex soon after their synthesis and directing transport of the complex from the endoplasmic reticulum to compartments where peptide loading of class II takes place. Enhance also the stimulation of T-cell responses through interaction with CD44. Binds to the peptide-binding site of MHC class II alpha/beta heterodimers forming an alpha-beta-CLIP complex, thereby preventing the loading of antigenic peptides to the MHC class II complex until its release by HLA-DM in the endosome. In terms of biological role, stabilizes the conformation of mature CTSL by binding to its active site and serving as a chaperone to help maintain a pool of mature enzyme in endocytic compartments and extracellular space of antigen-presenting cells (APCs). The sequence is that of H-2 class II histocompatibility antigen gamma chain from Rattus norvegicus (Rat).